Consider the following 181-residue polypeptide: Inner membrane-spanning protein YciB (181 aa).

The next 5 helical transmembrane spans lie at 24-44 (SATA…WLRH), 49-69 (NMLW…LILQ), 81-101 (LYWL…KNLI), 119-139 (LNIS…YVAY), and 149-169 (FKLF…ALLL).

It belongs to the YciB family.

It localises to the cell inner membrane. Plays a role in cell envelope biogenesis, maintenance of cell envelope integrity and membrane homeostasis. In Nitrosomonas eutropha (strain DSM 101675 / C91 / Nm57), this protein is Inner membrane-spanning protein YciB.